We begin with the raw amino-acid sequence, 213 residues long: 3-demethoxyubiquinol 3-hydroxylase (213 aa).

E62, E92, H95, E144, E176, and H179 together coordinate Fe cation.

Belongs to the COQ7 family. The cofactor is Fe cation.

It localises to the cell membrane. The catalysed reaction is a 5-methoxy-2-methyl-3-(all-trans-polyprenyl)benzene-1,4-diol + AH2 + O2 = a 3-demethylubiquinol + A + H2O. It functions in the pathway cofactor biosynthesis; ubiquinone biosynthesis. Catalyzes the hydroxylation of 2-nonaprenyl-3-methyl-6-methoxy-1,4-benzoquinol during ubiquinone biosynthesis. In Psychrobacter sp. (strain PRwf-1), this protein is 3-demethoxyubiquinol 3-hydroxylase.